The primary structure comprises 319 residues: L-lactate dehydrogenase (319 aa).

NAD(+) contacts are provided by residues Val11, Asp32, Arg37, Tyr62, and 76 to 77; that span reads GV. Substrate is bound by residues Gln79, Arg85, and 117–120; that span reads NPVD. NAD(+) contacts are provided by residues 115 to 117 and Ser140; that span reads VTN. Residue 145-148 participates in substrate binding; that stretch reads DTAR. Residues Arg150 and His165 each contribute to the beta-D-fructose 1,6-bisphosphate site. His172 (proton acceptor) is an active-site residue. Tyr217 carries the phosphotyrosine modification. Thr226 contributes to the substrate binding site.

It belongs to the LDH/MDH superfamily. LDH family. Homotetramer.

It is found in the cytoplasm. The enzyme catalyses (S)-lactate + NAD(+) = pyruvate + NADH + H(+). It participates in fermentation; pyruvate fermentation to lactate; (S)-lactate from pyruvate: step 1/1. Its activity is regulated as follows. Allosterically activated by fructose 1,6-bisphosphate (FBP). Functionally, catalyzes the conversion of lactate to pyruvate. The sequence is that of L-lactate dehydrogenase from Thermotoga sp. (strain RQ2).